Reading from the N-terminus, the 145-residue chain is D-aminoacyl-tRNA deacylase (145 aa).

The Gly-cisPro motif, important for rejection of L-amino acids signature appears at glycine 137 to proline 138.

This sequence belongs to the DTD family. As to quaternary structure, homodimer.

Its subcellular location is the cytoplasm. It catalyses the reaction glycyl-tRNA(Ala) + H2O = tRNA(Ala) + glycine + H(+). The enzyme catalyses a D-aminoacyl-tRNA + H2O = a tRNA + a D-alpha-amino acid + H(+). An aminoacyl-tRNA editing enzyme that deacylates mischarged D-aminoacyl-tRNAs. Also deacylates mischarged glycyl-tRNA(Ala), protecting cells against glycine mischarging by AlaRS. Acts via tRNA-based rather than protein-based catalysis; rejects L-amino acids rather than detecting D-amino acids in the active site. By recycling D-aminoacyl-tRNA to D-amino acids and free tRNA molecules, this enzyme counteracts the toxicity associated with the formation of D-aminoacyl-tRNA entities in vivo and helps enforce protein L-homochirality. This Klebsiella pneumoniae (strain 342) protein is D-aminoacyl-tRNA deacylase.